The following is a 660-amino-acid chain: Threonine--tRNA ligase (660 aa).

A TGS domain is found at 1-49 (MPINEIRVQKGQRYRDAINDKKVIAVKKGDKFLDLDEIAGEDEAVQPVY). The segment at 225 to 554 (DHRKIIAEMD…LLEHFAGKLP (330 aa)) is catalytic. Residues cysteine 318, histidine 369, and histidine 531 each contribute to the Zn(2+) site.

The protein belongs to the class-II aminoacyl-tRNA synthetase family. In terms of assembly, homodimer. It depends on Zn(2+) as a cofactor.

Its subcellular location is the cytoplasm. The enzyme catalyses tRNA(Thr) + L-threonine + ATP = L-threonyl-tRNA(Thr) + AMP + diphosphate + H(+). Functionally, catalyzes the attachment of threonine to tRNA(Thr) in a two-step reaction: L-threonine is first activated by ATP to form Thr-AMP and then transferred to the acceptor end of tRNA(Thr). This Thermoplasma volcanium (strain ATCC 51530 / DSM 4299 / JCM 9571 / NBRC 15438 / GSS1) protein is Threonine--tRNA ligase.